The sequence spans 43 residues: Protein PsbN (43 aa).

The chain crosses the membrane as a helical span at residues 5–27 (TLFAISISCLLVSFTGYALYTAF).

This sequence belongs to the PsbN family.

The protein localises to the plastid. It is found in the chloroplast thylakoid membrane. Functionally, may play a role in photosystem I and II biogenesis. This chain is Protein PsbN, found in Thuja plicata (Western red-cedar).